A 597-amino-acid polypeptide reads, in one-letter code: Probable methyltransferase-like protein 25 (597 aa).

Basic and acidic residues predominate over residues 245 to 254; the sequence is ECKGDAESVQ. Disordered stretches follow at residues 245–265 and 317–342; these read ECKGDAESVQRSRLGNPDLSA and TSSQVQNTEKSGLRKERRNTASKARD. The segment covering 317–326 has biased composition (polar residues); that stretch reads TSSQVQNTEK.

Probable methyltransferase. The chain is Probable methyltransferase-like protein 25 (Mettl25) from Mus musculus (Mouse).